A 219-amino-acid chain; its full sequence is Flagellin B4 (219 aa).

Positions 1–5 are excised as a propeptide; sequence MHRKG.

The protein belongs to the archaeal flagellin family.

It is found in the archaeal flagellum. Flagellin is the subunit protein which polymerizes to form the filaments of archaeal flagella. The polypeptide is Flagellin B4 (flaB4) (Pyrococcus abyssi (strain GE5 / Orsay)).